The chain runs to 179 residues: Large ribosomal subunit protein uL5 (179 aa).

Lys-3 bears the N6-acetyllysine mark.

It belongs to the universal ribosomal protein uL5 family. As to quaternary structure, part of the 50S ribosomal subunit; part of the 5S rRNA/L5/L18/L25 subcomplex. Contacts the 5S rRNA and the P site tRNA. Forms a bridge to the 30S subunit in the 70S ribosome.

Its function is as follows. This is one of the proteins that bind and probably mediate the attachment of the 5S RNA into the large ribosomal subunit, where it forms part of the central protuberance. In the 70S ribosome it contacts protein S13 of the 30S subunit (bridge B1b), connecting the 2 subunits; this bridge is implicated in subunit movement. Contacts the P site tRNA; the 5S rRNA and some of its associated proteins might help stabilize positioning of ribosome-bound tRNAs. The sequence is that of Large ribosomal subunit protein uL5 from Shigella flexneri.